Reading from the N-terminus, the 647-residue chain is MRLFFTPSMSNLSIFFSILLLSLPLPSIGDLAADKSALLSFRSAVGGRTLLWDVKQTSPCNWTGVLCDGGRVTALRLPGETLSGHIPEGIFGNLTQLRTLSLRLNGLTGSLPLDLGSCSDLRRLYLQGNRFSGEIPEVLFSLSNLVRLNLAENEFSGEISSGFKNLTRLKTLYLENNKLSGSLLDLDLSLDQFNVSNNLLNGSIPKSLQKFDSDSFVGTSLCGKPLVVCSNEGTVPSQPISVGNIPGTVEGSEEKKKRKKLSGGAIAGIVIGCVVGLSLIVMILMVLFRKKGNERTRAIDLATIKHHEVEIPGEKAAVEAPENRSYVNEYSPSAVKAVEVNSSGMKKLVFFGNATKVFDLEDLLRASAEVLGKGTFGTAYKAVLDAVTLVAVKRLKDVTMADREFKEKIEVVGAMDHENLVPLRAYYYSGDEKLLVYDFMPMGSLSALLHGNKGAGRPPLNWEVRSGIALGAARGLDYLHSQDPLSSHGNVKSSNILLTNSHDARVSDFGLAQLVSASSTTPNRATGYRAPEVTDPRRVSQKADVYSFGVVLLELLTGKAPSNSVMNEEGMDLARWVHSVAREEWRNEVFDSELMSIETVVSVEEEMAEMLQLGIDCTEQHPDKRPVMVEVVRRIQELRQSGADRVG.

The first 29 residues, 1-29 (MRLFFTPSMSNLSIFFSILLLSLPLPSIG), serve as a signal peptide directing secretion. LRR repeat units follow at residues 69 to 93 (GGRV…IFGN), 94 to 118 (LTQL…LGSC), 119 to 142 (SDLR…LFSL), 144 to 165 (NLVR…GFKN), and 166 to 192 (LTRL…SLDQ). Residues 268-288 (GIVIGCVVGLSLIVMILMVLF) form a helical membrane-spanning segment. The region spanning 365 to 639 (RASAEVLGKG…EVVRRIQELR (275 aa)) is the Protein kinase domain. S367 is subject to Phosphoserine. Residue 371-379 (LGKGTFGTA) participates in ATP binding. The residue at position 388 (T388) is a Phosphothreonine. An ATP-binding site is contributed by K393. Residue S444 is modified to Phosphoserine. T520 bears the Phosphothreonine mark. A Phosphoserine modification is found at S540. Residue T618 is modified to Phosphothreonine.

This sequence belongs to the protein kinase superfamily. Ser/Thr protein kinase family. As to quaternary structure, interacts with At3g17950, At3g27210 and At5g05190. Post-translationally, autophosphorylation. In terms of tissue distribution, expressed in root tips, lateral root primordia, stipules, and floral organ abscission zones.

The protein localises to the cell membrane. The polypeptide is Probable inactive receptor kinase RLK902 (RLK902) (Arabidopsis thaliana (Mouse-ear cress)).